Here is a 357-residue protein sequence, read N- to C-terminus: Ribosomal RNA small subunit methyltransferase C (357 aa).

This sequence belongs to the methyltransferase superfamily. RsmC family. As to quaternary structure, monomer.

The protein localises to the cytoplasm. The catalysed reaction is guanosine(1207) in 16S rRNA + S-adenosyl-L-methionine = N(2)-methylguanosine(1207) in 16S rRNA + S-adenosyl-L-homocysteine + H(+). Functionally, specifically methylates the guanine in position 1207 of 16S rRNA in the 30S particle. This Colwellia psychrerythraea (strain 34H / ATCC BAA-681) (Vibrio psychroerythus) protein is Ribosomal RNA small subunit methyltransferase C.